We begin with the raw amino-acid sequence, 301 residues long: MAKEIVGGFKFDQRHGKERVRVARVWKTKKGGYFIVEWRVGISLLSDCVNSYVRDDNSDIVATDTMKNTVYAKAKECSEILSVEDFAILLAKHFISFYKQVTAAIVNIVEKPWERVSVDGQPHEHGFKLGSERHTAEAIVQKSGALQLTSGIEGLSLLKTTKSGFEGFIRDKYTALPETHERMLATEVTALWRYSYESLYSIPQKPLYFTDKYLEVKKVLADTFFGPPNVGVYSPSVQNTLYLMAKAHSSIQLKMPNIHFLPVNISNKDGPIVKFDDDVYFPTDEPHGSIQASLSRLWSKL.

Catalysis depends on charge relay system residues Lys17 and Thr63. Residues Thr63, Asp64, Phe165, Arg182, Val237, Gln238, and Asn257 each contribute to the urate site. His259 serves as the catalytic Charge relay system. Positions 299–301 (SKL) match the Microbody targeting signal motif.

Belongs to the uricase family.

It is found in the peroxisome. The enzyme catalyses urate + O2 + H2O = 5-hydroxyisourate + H2O2. It participates in purine metabolism; urate degradation; (S)-allantoin from urate: step 1/3. Functionally, catalyzes the oxidation of uric acid to 5-hydroxyisourate, which is further processed to form (S)-allantoin. This chain is Uricase-2 isozyme 2, found in Canavalia lineata (Beach bean).